The following is an 89-amino-acid chain: Small ribosomal subunit protein uS17 (89 aa).

Belongs to the universal ribosomal protein uS17 family. As to quaternary structure, part of the 30S ribosomal subunit.

Its function is as follows. One of the primary rRNA binding proteins, it binds specifically to the 5'-end of 16S ribosomal RNA. In Variovorax paradoxus (strain S110), this protein is Small ribosomal subunit protein uS17.